Reading from the N-terminus, the 651-residue chain is MPPMTIKDGEYTATVYKMIKEGRYGDAIHILSKEHQKHTKSRAALSLLGYCYYHMQDFTNAAECYEQLTQLHPEVEDYKLYYAQSLYGACAFPEAMKSTFLLDNTTSHTKMIKLQAAIKYGEEDYSGAKTLVEQLPQEDPDYDVDLGCLLYKEGEFEEACKKFMSSMNVLGYQPDLAYNIALCYYSLKQYASALKYIAEIIERGIREHPELSIGMTTEGIDVRSVGNTLILHETALIEAFNLKAAIEYQLKNYAAAQEALTDMPPRSEEELDPVTLHNQALMNMDTKPTEGFEKLAFLLQQNPFPPVTFGNLLLLYCKYEYFDLAADVLAENAHLTYKFLTPYLYEFLDAMITCQTAPEEAFRKFDENAGKLTEQLRKVTKQVQEARHNRDDESLKKYVQDYDEVLEKYIPVLMAQAKIYWNRENYSMVEKIFHKSLEFCNEHDTWKLNVAHVLFMQDNKYKEAIGFYEPIVKKHYENILNVSAIVLANLCVSYIMTSQNEEAEELMRKIEKEEEQISYDDPDKKIFHLCIVNLVIGTLYCAKGNYDFGISRVIKSLEPYNKKLGTDTWFYAKRCFLSLLENMAKHMIMLRDSVVQECIQFLEHCELYGKDVLAIIEQPLEEDRMHIGKNTVTYESRLIKALFYEVTGWNE.

TPR repeat units follow at residues 8-41, 42-75, 140-173, 175-207, 379-410, 411-443, and 445-478; these read DGEY…HTKS, RAAL…HPEV, PDYD…LGYQ, DLAY…GIRE, VTKQ…EKYI, PVLM…CNEH, and TWKL…HYEN. Residues 494-521 adopt a coiled-coil conformation; sequence YIMTSQNEEAEELMRKIEKEEEQISYDD. A TPR 8 repeat occupies 530–563; the sequence is CIVNLVIGTLYCAKGNYDFGISRVIKSLEPYNKK.

It belongs to the TTC30/dfy-1/fleer family. Localizes to the cilia of many ciliated epithelial cell types including pronephric cells, olfactory placode, the brain ventricle and lateral line organs.

The protein localises to the cell projection. Its subcellular location is the cilium. Functionally, plays a role in anterograde intraflagellar transport (IFT), the process by which cilia precursors are transported from the base of the cilium to the site of their incorporation at the tip. Required for polyglutamylation of axonemal tubulin, which is a prerequisite for correct assembly of cilia and for normal cilia beat amplitude. Does not seem to be required for neuronal microtubule polyglutamylation. The polypeptide is Intraflagellar transport protein 70A (ift70a) (Danio rerio (Zebrafish)).